The following is a 221-amino-acid chain: Probable molybdenum cofactor guanylyltransferase (221 aa).

Residues Leu-17–Gly-19, Lys-29, Asp-74, and Asp-103 each bind GTP. Residue Asp-103 coordinates Mg(2+).

It belongs to the MobA family. Mg(2+) serves as cofactor.

The protein localises to the cytoplasm. It catalyses the reaction Mo-molybdopterin + GTP + H(+) = Mo-molybdopterin guanine dinucleotide + diphosphate. Transfers a GMP moiety from GTP to Mo-molybdopterin (Mo-MPT) cofactor (Moco or molybdenum cofactor) to form Mo-molybdopterin guanine dinucleotide (Mo-MGD) cofactor. In Peptoclostridium acidaminophilum (Eubacterium acidaminophilum), this protein is Probable molybdenum cofactor guanylyltransferase.